Consider the following 46-residue polypeptide: Viscotoxin-C1 (46 aa).

Cystine bridges form between C3/C40, C4/C32, and C16/C26.

In terms of assembly, monomer.

It localises to the secreted. In terms of biological role, thionins are small plant proteins which are toxic to animal cells. They seem to exert their toxic effect at the level of the cell membrane. Their precise function is not known. The sequence is that of Viscotoxin-C1 from Viscum album (European mistletoe).